Here is a 276-residue protein sequence, read N- to C-terminus: Cytoskeleton protein RodZ (276 aa).

The Cytoplasmic segment spans residues 1-110; it reads MTSMRKKTIG…SSKKKKKKTS (110 aa). A helical; Signal-anchor for type II membrane protein transmembrane segment spans residues 111-131; the sequence is FLPLFYFILFALSILIFVTYY. The Extracellular portion of the chain corresponds to 132-276; the sequence is VWNYIQTQPE…GQITVTFTKN (145 aa).

It belongs to the RodZ family. Interacts with MltG and MreC in the elongasome. Interacts with KhpB (also called EloR/Jag).

The protein localises to the cell membrane. Its function is as follows. Cytoskeletal protein that is involved in cell-shape control through regulation of the length of the long axis. Probably part of the elongasome which synthesizes peripheral peptidoglycan. The polypeptide is Cytoskeleton protein RodZ (Streptococcus pneumoniae (strain ATCC BAA-255 / R6)).